We begin with the raw amino-acid sequence, 2319 residues long: MLTMSVTLSPLRSQDLDPMATDASPMAINMTPTVEQGEGEEAMKDMDSDQQYEKPPPLHTGADWKIVLHLPEIETWLRMTSERVRDLTYSVQQDSDSKHVDVHLVQLKDICEDISDHVEQIHALLETEFSLKLLSYSVNVIVDIHAVQLLWHQLRVSVLVLRERILQGLQDANGNYTRQTDILQAFSEETKEGRLDSLTEVDDSGQLTIKCSQNYLSLDCGITAFELSDYSPSEDLLSGLGDMTSSQVKTKPFDSWSYSEMEKEFPELIRSVGLLTVAADSISTNGSEAVTEEVSQVSLSVDDKGGCEEDNASAVEEQPGLTLGVSSSSGEALTNAAQPSSETVQQESSSSSHHDAKNQQPVPCENATPKRTIRDCFNYNEDSPTQPTLPKRGLFLKEETFKNDLKGNGGKRQMVDLKPEMSRSTPSLVDPPDRSKLCLVLQSSYPNSPSAASQSYECLHKVGNGNLENTVKFHIKEISSSLGRLNDCYKEKSRLKKPHKTSEEVPPCRTPKRGTGSGKQAKNTKSSAVPNGELSYTSKAIEGPQTNSASTSSLEPCNQRSWNAKLQLQSETSSSPAFTQSSESSVGSDNIMSPVPLLSKHKSKKGQASSPSHVTRNGEVVEAWYGSDEYLALPSHLKQTEVLALKLENLTKLLPQKPRGETIQNIDDWELSEMNSDSEIYPTYHVKKKHTRLGRVSPSSSSDIASSLGESIESGPLSDILSDEESSMPLAGMKKYADEKSERASSSEKNESHSATKSALIQKLMQDIQHQDNYEAIWEKIEGFVNKLDEFIQWLNEAMETTENWTPPKAEMDDLKLYLETHLSFKLNVDSHCALKEAVEEEGHQLLELIASHKAGLKDMLRMIASQWKELQRQIKRQHSWILRALDTIKAEILATDVSVEDEEGTGSPKAEVQLCYLEAQRDAVEQMSLKLYSEQYTSSSKRKEEFADMSKVHSVGSNGLLDFDSEYQELWDWLIDMESLVMDSHDLMMSEEQQQHLYKRYSVEMSIRHLKKTELLSKVEALKKGGVLLPNDLLEKVDSINEKWELLGKTLGEKIQDTMAGHSGSSPRDLLSPESGSLVRQLEVRIKELKGWLRDTELFIFNSCLRQEKEGTMNTEKQLQYFKSLCREIKQRRRGVASILRLCQHLLDDRETCNLNADHQPMQLIIVNLERRWEAIVMQAVQWQTRLQKKMGKESETLNVIDPGLMDLNGMSEDALEWDEMDISNKLISLNEESNDLDQELQPVIPSLKLGETSNEDPGYDEEADNHGGSQYASNITAPSSPHIYQVYSLHNVELYEDNHMPFLKNNPKVTGMTQPNVLTKSLSKDSSFSSTKSLPDLLGGSNLVKPCACHGGDMSQNSGSESGIVSEGDTETTTNSEMCLLNAVDGSPSNLETEHLDPQMGDAVNVLKQKFTDEGESIKLPNSSQSSISPVGCVNGKVGDLNSITKHTPDCLGEELQGKHDVFTFYDYSYLQGSKLKLPMIMKQSQSEKAHVEDPLLRGFYFDKKSCKSKHQTTELQPDVPPHERILASASHEMDRISYKSGNIEKTFTGMQNAKQLSLLSHSSSIESLSPGGDLFGLGIFKNGSDSLQRSTSLESWLTSYKSNEDLFSCHSSGDISVSSGSVGELSKRTLDLLNRLENIQSPSEQKIKRSVSDITLQSSSQKMSFTGQMSLDIASSINEDSAASLTELSSSDELSLCSEDIVLHKNKIPESNASFRKRLTRSVADESDVNVSMIVNVSCTSACTDDEDDSDLLSSSTLTLTEEELCIKDEDDDSSIATDDEIYEDCTLMSGLDYIKNELQTWIRPKLSLTRDKKRCNVSDEMKGSKDISSSEMTNPSDTLNIETLLNGSVKRVSENNGNGKNSSHTHELGTKRENKKTIFKVNKDPYVADMENGNIEGIPERQKGKPNVTSKVSENLGSHGKEISESEHCKCKALMDSLDDSNTAGKEFVSQDVRHLPKKCPNHHHFENQSTASTPTEKSFSELALETRFNNRQDSDALKSSDDAPSMAGKSAGCCLALEQNGTEENASISNISCCNCEPDVFHQKDAEDCSVHNFVKEIIDMASTALKSKSQPENEVAAPTSLTQIKEKVLEHSHRPIQLRKGDFYSYLSLSSHDSDCGEVTNYIEEKSSTPLPLDTTDSGLDDKEDIECFFEACVEGDSDGEEPCFSSAPPNESAVPSEAAMPLQATACSSEFSDSSLSADDADTVALSSPSSQERAEVGKEVNGLPQTSSGCAENLEFTPSKLDSEKESSGKPGESGMPEEHNAASAKSKVQDLSLKANQPTDKAALHPSPKTLTCEENLLNLHEKRHRNMHR.

Composition is skewed to polar residues over residues 1–12 (MLTMSVTLSPLR) and 324–339 (GVSS…AAQP). Disordered stretches follow at residues 1-24 (MLTM…TDAS), 301-369 (VDDK…NATP), 493-532 (SRLK…VPNG), 566-614 (LQLQ…PSHV), and 691-757 (TRLG…SATK). Positions 340 to 351 (SSETVQQESSSS) are enriched in low complexity. Composition is skewed to polar residues over residues 518-532 (GKQA…VPNG) and 566-591 (LQLQ…SDNI). The span at 697–711 (SPSSSSDIASSLGES) shows a compositional bias: low complexity. Basic and acidic residues predominate over residues 735–754 (KYADEKSERASSSEKNESHS). 2 Spectrin repeats span residues 762–848 (QKLM…QLLE) and 1036–1150 (EKVD…LLDD). The residue at position 1073 (Ser-1073) is a Phosphoserine. The interval 1250–1272 (KLGETSNEDPGYDEEADNHGGSQ) is disordered. Residues 1255-1265 (SNEDPGYDEEA) are compositionally biased toward acidic residues. 2 positions are modified to phosphoserine: Ser-1570 and Ser-1595. Disordered regions lie at residues 1821 to 1842 (VSDE…PSDT), 1900 to 1925 (EGIP…SHGK), and 1963 to 1983 (KCPN…TEKS). 3 stretches are compositionally biased toward polar residues: residues 1830–1842 (DISS…PSDT), 1911–1920 (NVTSKVSENL), and 1972–1982 (NQSTASTPTEK). Residues 2063–2076 (IIDMASTALKSKSQ) are PKA-RII subunit binding domain. Residues 2198-2215 (FSDSSLSADDADTVALSS) are compositionally biased toward low complexity. Residues 2198-2319 (FSDSSLSADD…HEKRHRNMHR (122 aa)) are disordered.

Interacts with RII subunit of PKA, phosphatase 2B (calcineurin) and AKAP79. Interacts with SYNPO2. As to expression, highly expressed in cardiac and skeletal muscle, followed by brain.

It is found in the sarcoplasmic reticulum. Its subcellular location is the nucleus membrane. Its function is as follows. Binds to type II regulatory subunits of protein kinase A and anchors/targets them to the nuclear membrane or sarcoplasmic reticulum. May act as an adapter for assembling multiprotein complexes. The polypeptide is A-kinase anchor protein 6 (AKAP6) (Homo sapiens (Human)).